The chain runs to 259 residues: Type III pantothenate kinase (259 aa).

6 to 13 contributes to the ATP binding site; that stretch reads DVGNTNCT. 107-110 provides a ligand contact to substrate; that stretch reads GSDR. Asp109 functions as the Proton acceptor in the catalytic mechanism. Residue Asp129 coordinates K(+). Thr132 lines the ATP pocket. Thr184 contributes to the substrate binding site.

Belongs to the type III pantothenate kinase family. In terms of assembly, homodimer. The cofactor is NH4(+). K(+) is required as a cofactor.

The protein resides in the cytoplasm. The enzyme catalyses (R)-pantothenate + ATP = (R)-4'-phosphopantothenate + ADP + H(+). Its pathway is cofactor biosynthesis; coenzyme A biosynthesis; CoA from (R)-pantothenate: step 1/5. In terms of biological role, catalyzes the phosphorylation of pantothenate (Pan), the first step in CoA biosynthesis. The protein is Type III pantothenate kinase of Listeria monocytogenes serotype 4b (strain CLIP80459).